A 571-amino-acid chain; its full sequence is Asparagine--tRNA ligase, cytoplasmic 3 (571 aa).

Position 2 is an N-acetylglycine (glycine 2). Positions 50-128 (VRIGGWVKTG…QSIELSVETV (79 aa)) form a DNA-binding region, OB. Positions 233–289 (DVEAARLIVKERGEAVAQLKVAKASKEEITASVAQLSVAKASLAHVEERLRLKPGLP) constitute a WHEP-TRS domain.

It belongs to the class-II aminoacyl-tRNA synthetase family.

The protein localises to the cytoplasm. Its subcellular location is the cytosol. The enzyme catalyses tRNA(Asn) + L-asparagine + ATP = L-asparaginyl-tRNA(Asn) + AMP + diphosphate + H(+). The polypeptide is Asparagine--tRNA ligase, cytoplasmic 3 (Arabidopsis thaliana (Mouse-ear cress)).